Reading from the N-terminus, the 254-residue chain is HTH-type transcriptional regulator GlvR (254 aa).

The HTH rpiR-type domain maps to 1-77 (MQLEELINQH…VFLKWEDQPE (77 aa)). Positions 37–56 (IDALAKACSVSRSSILRLAQ) form a DNA-binding region, H-T-H motif. The SIS domain occupies 106 to 248 (MCQLIDAADR…FRAYVDYKEA (143 aa)).

In terms of biological role, positive regulator of the glv operon expression, which consists of GlvA, GlvR and GlvC. The polypeptide is HTH-type transcriptional regulator GlvR (glvR) (Bacillus subtilis (strain 168)).